We begin with the raw amino-acid sequence, 87 residues long: UPF0729 protein C18orf32 homolog (87 aa).

This sequence belongs to the UPF0729 family.

This chain is UPF0729 protein C18orf32 homolog, found in Esox lucius (Northern pike).